The primary structure comprises 317 residues: Secreted mono- and diacylglycerol lipase 3 (317 aa).

The signal sequence occupies residues 1–29 (MMFADDLVRMAVLRFITVALAAITNVANA). The cysteines at positions 61 and 310 are disulfide-linked. An N-linked (GlcNAc...) asparagine glycan is attached at asparagine 108. Residue serine 175 is the Nucleophile of the active site. An N-linked (GlcNAc...) asparagine glycan is attached at asparagine 194. Aspartate 234 is an active-site residue. The N-linked (GlcNAc...) asparagine glycan is linked to asparagine 258. Histidine 294 is an active-site residue.

This sequence belongs to the AB hydrolase superfamily. Lipase family. Class 3 subfamily.

The protein localises to the secreted. The catalysed reaction is a monoacylglycerol + H2O = glycerol + a fatty acid + H(+). It carries out the reaction a diacylglycerol + H2O = a monoacylglycerol + a fatty acid + H(+). Its function is as follows. Secreted mono- and diacylglycerol lipase involved in plant virulence. Has a substrate preference for p-nitrophenyl esters with a carbon chain length of C10 (p-nitrophenyl caprate). The protein is Secreted mono- and diacylglycerol lipase 3 of Gibberella zeae (strain ATCC MYA-4620 / CBS 123657 / FGSC 9075 / NRRL 31084 / PH-1) (Wheat head blight fungus).